The chain runs to 148 residues: Small ribosomal subunit protein uS7m (148 aa).

It belongs to the universal ribosomal protein uS7 family. As to quaternary structure, part of the small ribosomal subunit.

The protein resides in the mitochondrion. One of the primary rRNA binding proteins, it binds directly to 18S rRNA where it nucleates assembly of the head domain of the small subunit. The polypeptide is Small ribosomal subunit protein uS7m (RPS7) (Triticum aestivum (Wheat)).